We begin with the raw amino-acid sequence, 341 residues long: Phosphoribosylformylglycinamidine cyclo-ligase (341 aa).

The protein belongs to the AIR synthase family.

It localises to the cytoplasm. The catalysed reaction is 2-formamido-N(1)-(5-O-phospho-beta-D-ribosyl)acetamidine + ATP = 5-amino-1-(5-phospho-beta-D-ribosyl)imidazole + ADP + phosphate + H(+). It participates in purine metabolism; IMP biosynthesis via de novo pathway; 5-amino-1-(5-phospho-D-ribosyl)imidazole from N(2)-formyl-N(1)-(5-phospho-D-ribosyl)glycinamide: step 2/2. The chain is Phosphoribosylformylglycinamidine cyclo-ligase from Picosynechococcus sp. (strain ATCC 27264 / PCC 7002 / PR-6) (Agmenellum quadruplicatum).